A 671-amino-acid chain; its full sequence is Major S-layer protein (671 aa).

The first 24 residues, 1–24 (MKRFAALSLAALMLLTVFASAASA), serve as a signal peptide directing secretion. N-linked (GlcNAc...) asparagine glycosylation is found at Asn36, Asn70, Asn116, and Asn350. A disordered region spans residues 594–650 (GEEVSGEEETPEETPTGEVTETEGEEETPTEVTETPTEGEPAPEETETTESEGTTPG). A compositionally biased stretch (acidic residues) spans 613-622 (TETEGEEETP). Positions 623-633 (TEVTETPTEGE) are enriched in low complexity. Over residues 634–643 (PAPEETETTE) the composition is skewed to acidic residues. A helical transmembrane segment spans residues 647 to 667 (TTPGFGFMFGLVGLLAVVYLV).

The protein belongs to the Methanosarcinales S-layer protein family. Post-translationally, glycosylated.

The protein localises to the secreted. It is found in the cell wall. The protein resides in the S-layer. Its subcellular location is the cell membrane. Functionally, S-layer protein. The S-layer is a paracrystalline mono-layered assembly of proteins which coat the surface of the cell. This is Major S-layer protein from Methanosarcina acetivorans (strain ATCC 35395 / DSM 2834 / JCM 12185 / C2A).